A 216-amino-acid polypeptide reads, in one-letter code: Large ribosomal subunit protein uL24m (216 aa).

Residues 1–9 (MRLSALLAL) constitute a mitochondrion transit peptide. Ser24 carries the phosphoserine modification. The 34-residue stretch at 56 to 89 (LFCGDTVEILEGKDAGKQGKVVQVIRQRNWVVVG) folds into the KOW domain.

It belongs to the universal ribosomal protein uL24 family. In terms of assembly, component of the mitochondrial large ribosomal subunit (mt-LSU). Mature mammalian 55S mitochondrial ribosomes consist of a small (28S) and a large (39S) subunit. The 28S small subunit contains a 12S ribosomal RNA (12S mt-rRNA) and 30 different proteins. The 39S large subunit contains a 16S rRNA (16S mt-rRNA), a copy of mitochondrial valine transfer RNA (mt-tRNA(Val)), which plays an integral structural role, and 52 different proteins.

It is found in the mitochondrion. The polypeptide is Large ribosomal subunit protein uL24m (MRPL24) (Homo sapiens (Human)).